We begin with the raw amino-acid sequence, 280 residues long: Adenosylcobinamide-GDP ribazoletransferase (280 aa).

Transmembrane regions (helical) follow at residues 4-24 (YLLA…GISM), 39-59 (VVGA…QVIF), 61-81 (GPVL…FNHL), 108-128 (TIGT…YGSI), 196-216 (FLIG…WIGL), and 255-275 (TALI…MGGF).

Belongs to the CobS family. Mg(2+) is required as a cofactor.

Its subcellular location is the cell membrane. It catalyses the reaction alpha-ribazole + adenosylcob(III)inamide-GDP = adenosylcob(III)alamin + GMP + H(+). The catalysed reaction is alpha-ribazole 5'-phosphate + adenosylcob(III)inamide-GDP = adenosylcob(III)alamin 5'-phosphate + GMP + H(+). It participates in cofactor biosynthesis; adenosylcobalamin biosynthesis; adenosylcobalamin from cob(II)yrinate a,c-diamide: step 7/7. Functionally, joins adenosylcobinamide-GDP and alpha-ribazole to generate adenosylcobalamin (Ado-cobalamin). Also synthesizes adenosylcobalamin 5'-phosphate from adenosylcobinamide-GDP and alpha-ribazole 5'-phosphate. This chain is Adenosylcobinamide-GDP ribazoletransferase, found in Methanosarcina barkeri (strain Fusaro / DSM 804).